Consider the following 209-residue polypeptide: Dephospho-CoA kinase (209 aa).

Positions 13 to 209 (RIGLTGGIAT…AIEKVVVAEN (197 aa)) constitute a DPCK domain. 21–26 (ATGKST) contacts ATP.

Belongs to the CoaE family.

It localises to the cytoplasm. It carries out the reaction 3'-dephospho-CoA + ATP = ADP + CoA + H(+). It functions in the pathway cofactor biosynthesis; coenzyme A biosynthesis; CoA from (R)-pantothenate: step 5/5. Its function is as follows. Catalyzes the phosphorylation of the 3'-hydroxyl group of dephosphocoenzyme A to form coenzyme A. The sequence is that of Dephospho-CoA kinase from Synechococcus elongatus (strain ATCC 33912 / PCC 7942 / FACHB-805) (Anacystis nidulans R2).